A 168-amino-acid polypeptide reads, in one-letter code: Plastocyanin, chloroplastic (168 aa).

Positions 70 to 168 (VEVLLGGGDG…AGMVGKVTVN (99 aa)) constitute a Plastocyanin-like domain. 4 residues coordinate Cu cation: histidine 106, cysteine 153, histidine 156, and methionine 161.

This sequence belongs to the plastocyanin family. It depends on Cu(2+) as a cofactor.

The protein localises to the plastid. Its subcellular location is the chloroplast thylakoid membrane. Participates in electron transfer between P700 and the cytochrome b6-f complex in photosystem I. This is Plastocyanin, chloroplastic (PETE) from Spinacia oleracea (Spinach).